We begin with the raw amino-acid sequence, 921 residues long: Isoleucine--tRNA ligase (921 aa).

The 'HIGH' region motif lies at 57-67; it reads PYANGDIHMGH. Glutamate 552 is an L-isoleucyl-5'-AMP binding site. A 'KMSKS' region motif is present at residues 593–597; the sequence is KMSKS. Position 596 (lysine 596) interacts with ATP. Zn(2+) contacts are provided by cysteine 888, cysteine 891, cysteine 908, and cysteine 911.

Belongs to the class-I aminoacyl-tRNA synthetase family. IleS type 1 subfamily. In terms of assembly, monomer. Requires Zn(2+) as cofactor.

Its subcellular location is the cytoplasm. The enzyme catalyses tRNA(Ile) + L-isoleucine + ATP = L-isoleucyl-tRNA(Ile) + AMP + diphosphate. Its function is as follows. Catalyzes the attachment of isoleucine to tRNA(Ile). As IleRS can inadvertently accommodate and process structurally similar amino acids such as valine, to avoid such errors it has two additional distinct tRNA(Ile)-dependent editing activities. One activity is designated as 'pretransfer' editing and involves the hydrolysis of activated Val-AMP. The other activity is designated 'posttransfer' editing and involves deacylation of mischarged Val-tRNA(Ile). This is Isoleucine--tRNA ligase from Bacillus cereus (strain G9842).